The primary structure comprises 195 residues: HTH-type transcriptional regulator BetI (195 aa).

Residues 8-68 form the HTH tetR-type domain; sequence SIRRRQLIDA…ATMRDITSQL (61 aa). The H-T-H motif DNA-binding region spans 31–50; the sequence is TIAQIARRAGVSTGIISHYF.

It functions in the pathway amine and polyamine biosynthesis; betaine biosynthesis via choline pathway [regulation]. In terms of biological role, repressor involved in the biosynthesis of the osmoprotectant glycine betaine. It represses transcription of the choline transporter BetT and the genes of BetAB involved in the synthesis of glycine betaine. This chain is HTH-type transcriptional regulator BetI, found in Escherichia coli (strain SMS-3-5 / SECEC).